The chain runs to 813 residues: Xaa-Pro dipeptidyl-peptidase (813 aa).

Residues serine 375, aspartate 495, and histidine 526 each act as charge relay system in the active site.

The protein belongs to the peptidase S15 family. In terms of assembly, homodimer.

It localises to the cytoplasm. It catalyses the reaction Hydrolyzes Xaa-Pro-|- bonds to release unblocked, N-terminal dipeptides from substrates including Ala-Pro-|-p-nitroanilide and (sequentially) Tyr-Pro-|-Phe-Pro-|-Gly-Pro-|-Ile.. Its function is as follows. Removes N-terminal dipeptides sequentially from polypeptides having unsubstituted N-termini provided that the penultimate residue is proline. In Lactiplantibacillus plantarum (strain ATCC BAA-793 / NCIMB 8826 / WCFS1) (Lactobacillus plantarum), this protein is Xaa-Pro dipeptidyl-peptidase.